Here is a 513-residue protein sequence, read N- to C-terminus: ATP synthase subunit alpha (513 aa).

Position 169-176 (169-176 (GDRQTGKT)) interacts with ATP.

This sequence belongs to the ATPase alpha/beta chains family. As to quaternary structure, F-type ATPases have 2 components, CF(1) - the catalytic core - and CF(0) - the membrane proton channel. CF(1) has five subunits: alpha(3), beta(3), gamma(1), delta(1), epsilon(1). CF(0) has three main subunits: a(1), b(2) and c(9-12). The alpha and beta chains form an alternating ring which encloses part of the gamma chain. CF(1) is attached to CF(0) by a central stalk formed by the gamma and epsilon chains, while a peripheral stalk is formed by the delta and b chains.

It is found in the cell inner membrane. The catalysed reaction is ATP + H2O + 4 H(+)(in) = ADP + phosphate + 5 H(+)(out). Functionally, produces ATP from ADP in the presence of a proton gradient across the membrane. The alpha chain is a regulatory subunit. This Yersinia pseudotuberculosis serotype O:1b (strain IP 31758) protein is ATP synthase subunit alpha.